Here is a 423-residue protein sequence, read N- to C-terminus: 58 kDa phosphoprotein (423 aa).

Residues 46–60 are compositionally biased toward basic and acidic residues; the sequence is KMGYEKMKSEDSTEE. Residues 46 to 82 are disordered; sequence KMGYEKMKSEDSTEEKSDEEEEDEEEEEEEEEDDDPE. Positions 61 to 82 are enriched in acidic residues; it reads KSDEEEEDEEEEEEEEEDDDPE. 3 TPR repeats span residues 113–146, 147–180, and 181–214; these read ICKL…GNPS, AMIY…NVDS, and ANAY…DYDE. Residues 260–301 form a disordered region; it reads KKKAEKMYKENNKRENYDSDSSDSSYSEPDFSGDFPGGMPGG. Residues 264–276 show a composition bias toward basic and acidic residues; the sequence is EKMYKENNKRENY. The tract at residues 292 to 362 is 19 X 3-4 AA approximate repeats; the sequence is GDFPGGMPGG…GMPGMPGGMP (71 aa). Positions 361 to 423 constitute an STI1 domain; sequence MPDLNSPEMK…GGMMGEKPKP (63 aa).

It is found in the cytoplasm. In terms of biological role, may play a role in protein folding or protein-protein interactions. May act as a co-chaperone. This is 58 kDa phosphoprotein from Plasmodium berghei.